A 425-amino-acid chain; its full sequence is MRNFLYCTGVLLLLWMSTSSQAALNIEIFGGGTNKIPIAIAPFNGERGLPQSISAIVSADLERTGLFKLVDTLGLTSQEPEQIRYIDWQGRGASALVVGSISPLPDGRIDVRFRLLDVVKQTQLTGFSGAVTTEQLRAFAHRIADIVYETLTGEPGAFSTRIAFVRKQGSQYALQVSDYDGFNARSLIEYTEPIISPAWSPDGSRIAYTSFEKKKPVVYVQTLATRERKAVANFKGSNSAPAWSPDGSKLAVVLTLHGGSQIYLINADGSGLQRISQSPGIDTEPSFSPDGRWLMFTSDRGGSPQIYRMPVSGGVAERMTFEGDYNVSPHYSPDGKRFVYIHRNAGRFNVAIQDLSTRQMQLLTDSNFDESPSFSPNNRMILYTTEIGGRGILSTVSSDGQAKSRLSQEAGNIREAVWGPLLKQR.

Residues 1–22 form the signal peptide; it reads MRNFLYCTGVLLLLWMSTSSQA.

Belongs to the TolB family. As to quaternary structure, the Tol-Pal system is composed of five core proteins: the inner membrane proteins TolA, TolQ and TolR, the periplasmic protein TolB and the outer membrane protein Pal. They form a network linking the inner and outer membranes and the peptidoglycan layer.

Its subcellular location is the periplasm. In terms of biological role, part of the Tol-Pal system, which plays a role in outer membrane invagination during cell division and is important for maintaining outer membrane integrity. The chain is Tol-Pal system protein TolB from Nitrosomonas europaea (strain ATCC 19718 / CIP 103999 / KCTC 2705 / NBRC 14298).